The sequence spans 103 residues: Phosphoribosyl-ATP pyrophosphatase (103 aa).

The protein belongs to the PRA-PH family.

It is found in the cytoplasm. It carries out the reaction 1-(5-phospho-beta-D-ribosyl)-ATP + H2O = 1-(5-phospho-beta-D-ribosyl)-5'-AMP + diphosphate + H(+). Its pathway is amino-acid biosynthesis; L-histidine biosynthesis; L-histidine from 5-phospho-alpha-D-ribose 1-diphosphate: step 2/9. This Cereibacter sphaeroides (strain KD131 / KCTC 12085) (Rhodobacter sphaeroides) protein is Phosphoribosyl-ATP pyrophosphatase.